We begin with the raw amino-acid sequence, 205 residues long: MAEKNSSKKVTTKKPAAHPPAAEMVATAITELKDRNGSSLQAIKKYIATNFDVQMDRQLLFIKRALKSGVEKGKLVQTKGKGASGSFKVNVQAAKAQASEKAKKEKEKAKLLAQREKAKEKGCSEEGETAEGSRPKKVKAAPKKAKKPVKKTTEKKEKKKTPKKAPKKPAAKKSTPKKTPKKAAAKKPKTAKPKKPAXKKAAKSK.

Disordered regions lie at residues 1–21 (MAEKNSSKKVTTKKPAAHPPA) and 94–205 (AKAQ…AKSK). The H15 domain occupies 17 to 91 (AHPPAAEMVA…GASGSFKVNV (75 aa)). Positions 98 to 124 (ASEKAKKEKEKAKLLAQREKAKEKGCS) are enriched in basic and acidic residues. 2 stretches are compositionally biased toward basic residues: residues 135 to 150 (PKKVKAAPKKAKKPVK) and 157 to 205 (EKKK…AKSK).

It belongs to the histone H1/H5 family.

The protein resides in the nucleus. It localises to the chromosome. Its function is as follows. Histones H1 are necessary for the condensation of nucleosome chains into higher-order structures. This Strongylocentrotus purpuratus (Purple sea urchin) protein is Histone H1, early embryonic.